The chain runs to 137 residues: Putative pre-16S rRNA nuclease (137 aa).

This sequence belongs to the YqgF nuclease family.

Its subcellular location is the cytoplasm. In terms of biological role, could be a nuclease involved in processing of the 5'-end of pre-16S rRNA. The protein is Putative pre-16S rRNA nuclease of Bacillus cereus (strain G9842).